We begin with the raw amino-acid sequence, 78 residues long: Defensin-like protein (78 aa).

Residues 1–31 form the signal peptide; sequence MGRSIRLFATFFLIAMLFLSTEMGPMTSAEA. 4 disulfides stabilise this stretch: cysteine 34/cysteine 78, cysteine 45/cysteine 65, cysteine 51/cysteine 72, and cysteine 55/cysteine 74.

Belongs to the DEFL family. Predominantly expressed in the pistil during all stages of flower development.

The protein localises to the secreted. Its function is as follows. May be involved in the defense of the pistil against pathogen infection. This is Defensin-like protein from Petunia integrifolia (Violet-flowered petunia).